We begin with the raw amino-acid sequence, 204 residues long: Guanylate kinase (204 aa).

Residues 1 to 182 form the Guanylate kinase-like domain; it reads MLYIISAPSG…ALSDLNTIIC (182 aa). 7-14 serves as a coordination point for ATP; it reads APSGTGKS.

It belongs to the guanylate kinase family.

The protein resides in the cytoplasm. The catalysed reaction is GMP + ATP = GDP + ADP. Functionally, essential for recycling GMP and indirectly, cGMP. This Baumannia cicadellinicola subsp. Homalodisca coagulata protein is Guanylate kinase.